Consider the following 58-residue polypeptide: Leucine zipper protein 6 (58 aa).

Widely expressed, highest levels found in brain, placenta, spleen, testis, and ovary. Up-regulated in some tumor cells.

In Homo sapiens (Human), this protein is Leucine zipper protein 6 (LUZP6).